Here is a 196-residue protein sequence, read N- to C-terminus: ATP-dependent Clp protease proteolytic subunit (196 aa).

The active-site Nucleophile is Ser-101. Residue His-126 is part of the active site.

This sequence belongs to the peptidase S14 family. As to quaternary structure, component of the chloroplastic Clp protease core complex.

Its subcellular location is the plastid. The protein resides in the chloroplast stroma. It carries out the reaction Hydrolysis of proteins to small peptides in the presence of ATP and magnesium. alpha-casein is the usual test substrate. In the absence of ATP, only oligopeptides shorter than five residues are hydrolyzed (such as succinyl-Leu-Tyr-|-NHMec, and Leu-Tyr-Leu-|-Tyr-Trp, in which cleavage of the -Tyr-|-Leu- and -Tyr-|-Trp bonds also occurs).. Functionally, cleaves peptides in various proteins in a process that requires ATP hydrolysis. Has a chymotrypsin-like activity. Plays a major role in the degradation of misfolded proteins. In Morus indica (Mulberry), this protein is ATP-dependent Clp protease proteolytic subunit.